A 579-amino-acid polypeptide reads, in one-letter code: Putative fatty-acid--CoA ligase fadD21 (579 aa).

It belongs to the ATP-dependent AMP-binding enzyme family.

In Mycobacterium leprae (strain TN), this protein is Putative fatty-acid--CoA ligase fadD21 (fadD21).